Reading from the N-terminus, the 429-residue chain is G2/mitotic-specific cyclin-B1 (429 aa).

The segment covering M1–E14 has biased composition (polar residues). Disordered regions lie at residues M1–M21 and T71–T128. Position 73 is an N6-acetyllysine (K73). Residues P92–V106 show a composition bias toward acidic residues. The residue at position 122 (S122) is a Phosphoserine; by CDK1. S124 bears the Phosphoserine mark. Residue S129 is modified to Phosphoserine; by PLK1. S143 is modified (phosphoserine). 2 interaction with CDK2 regions span residues E165 to Y173 and Y254 to M257. Phosphothreonine is present on T317.

Belongs to the cyclin family. Cyclin AB subfamily. In terms of assembly, interacts with the CDC2 protein kinase to form a serine/threonine kinase holoenzyme complex also known as maturation promoting factor (MPF). The cyclin subunit imparts substrate specificity to the complex. Binds HEI10. Interacts with catalytically active RALBP1 and CDC2 during mitosis to form an endocytotic complex during interphase. Interacts with CCNF; interaction is required for nuclear localization. Interacts with CDK5RAP3. Interacts with RFPL4A and UBE2A. Interacts with INCA1. Ubiquitinated by the SCF(NIPA) complex during interphase, leading to its destruction. Not ubiquitinated during G2/M phases. In terms of processing, phosphorylated by PLK1 at Ser-129 on centrosomes during prophase: phosphorylation by PLK1 does not cause nuclear import. Phosphorylation at Ser-143 was also reported to be mediated by PLK1 but Ser-129 seems to be the primary phosphorylation site.

The protein resides in the cytoplasm. Its subcellular location is the nucleus. It localises to the cytoskeleton. The protein localises to the microtubule organizing center. It is found in the centrosome. Its function is as follows. Essential for the control of the cell cycle at the G2/M (mitosis) transition. This Cricetulus griseus (Chinese hamster) protein is G2/mitotic-specific cyclin-B1 (CCNB1).